Reading from the N-terminus, the 302-residue chain is tRNA pseudouridine synthase B (302 aa).

The Nucleophile role is filled by aspartate 43.

Belongs to the pseudouridine synthase TruB family. Type 1 subfamily.

It catalyses the reaction uridine(55) in tRNA = pseudouridine(55) in tRNA. Functionally, responsible for synthesis of pseudouridine from uracil-55 in the psi GC loop of transfer RNAs. The sequence is that of tRNA pseudouridine synthase B from Burkholderia mallei (strain NCTC 10247).